A 356-amino-acid chain; its full sequence is Altered inheritance of mitochondria protein 23, mitochondrial (356 aa).

The N-terminal 32 residues, 1–32 (MLKVPLSDVLSQKMLFLKSFRYFHCTKYFSRD), are a transit peptide targeting the mitochondrion.

The protein belongs to the AIM23 family.

Its subcellular location is the mitochondrion. This chain is Altered inheritance of mitochondria protein 23, mitochondrial (AIM23), found in Saccharomyces cerevisiae (strain YJM789) (Baker's yeast).